Consider the following 225-residue polypeptide: NAD(P)H-quinone oxidoreductase subunit K, chloroplastic (225 aa).

Positions 43, 44, 108, and 139 each coordinate [4Fe-4S] cluster.

Belongs to the complex I 20 kDa subunit family. As to quaternary structure, NDH is composed of at least 16 different subunits, 5 of which are encoded in the nucleus. It depends on [4Fe-4S] cluster as a cofactor.

It is found in the plastid. It localises to the chloroplast thylakoid membrane. It carries out the reaction a plastoquinone + NADH + (n+1) H(+)(in) = a plastoquinol + NAD(+) + n H(+)(out). The catalysed reaction is a plastoquinone + NADPH + (n+1) H(+)(in) = a plastoquinol + NADP(+) + n H(+)(out). In terms of biological role, NDH shuttles electrons from NAD(P)H:plastoquinone, via FMN and iron-sulfur (Fe-S) centers, to quinones in the photosynthetic chain and possibly in a chloroplast respiratory chain. The immediate electron acceptor for the enzyme in this species is believed to be plastoquinone. Couples the redox reaction to proton translocation, and thus conserves the redox energy in a proton gradient. The polypeptide is NAD(P)H-quinone oxidoreductase subunit K, chloroplastic (Nandina domestica (Heavenly bamboo)).